A 177-amino-acid chain; its full sequence is Large ribosomal subunit protein uL6 (177 aa).

At Lys-44 the chain carries N6-acetyllysine.

This sequence belongs to the universal ribosomal protein uL6 family. Part of the 50S ribosomal subunit.

In terms of biological role, this protein binds to the 23S rRNA, and is important in its secondary structure. It is located near the subunit interface in the base of the L7/L12 stalk, and near the tRNA binding site of the peptidyltransferase center. This Escherichia coli O139:H28 (strain E24377A / ETEC) protein is Large ribosomal subunit protein uL6.